The chain runs to 2568 residues: Highly reducing polyketide synthase resH (2568 aa).

Residues 9 to 437 (PEPIAIVGMA…GANAHAILDA (429 aa)) enclose the Ketosynthase family 3 (KS3) domain. Catalysis depends on for beta-ketoacyl synthase activity residues Cys184, His319, and His359. The Malonyl-CoA:ACP transacylase (MAT) domain occupies 549 to 877 (FIFTGQGAQW…KLAGSLFLSG (329 aa)). An N-terminal hotdog fold region spans residues 942-1081 (HDLLGSRLPG…TNDQLLWPDD (140 aa)). The 303-residue stretch at 942–1244 (HDLLGSRLPG…FSSLETASSD (303 aa)) folds into the PKS/mFAS DH domain. Catalysis depends on His974, which acts as the Proton acceptor; for dehydratase activity. Residues 1091–1244 (NKDSYDRRWY…FSSLETASSD (154 aa)) form a C-terminal hotdog fold region. Asp1156 serves as the catalytic Proton donor; for dehydratase activity. The methyltransferase (CMet) domain stretch occupies residues 1295–1595 (VTRLAIRSSA…SGADVVLDDY (301 aa)). The Enoyl reductase (ER) domain occupies 1853 to 2154 (GRLDSFYFKE…QEDSVGLAVL (302 aa)). The region spanning 2177–2357 (ASYLLIGCLG…QATSIALGMI (181 aa)) is the Ketoreductase (KR) domain. In terms of domain architecture, Carrier spans 2485-2563 (AVKSAILGLI…GLADQVVSLA (79 aa)). At Ser2522 the chain carries O-(pantetheine 4'-phosphoryl)serine.

Pantetheine 4'-phosphate serves as cofactor.

It participates in antifungal biosynthesis. Functionally, highly reducing polyketide synthase; part of the gene cluster that mediates the biosynthesis of the tetrahydropyranyl antifungal agent restricticin that acts as an inhibitor of CYP51 and blocks the ergosterol biosynthesis. The highly reducing polyketide synthase resH, the short chain dehydrogenase resG, the cyclase resF, the FAD-dependent monooxygenase resA and the enoylreductase resD are required to generate the first stable intermediate desmethylrestrictinol. ResH with resD biosynthesize the first polyketide chain intermediate that is reduced by resG, followed by epoxidation by resA before 6-endo cyclization via epoxide opening by resF leads to desmethylrestrictinol. The methyltransferase resE then catalyzes the C4 O-methylation of desmethylrestrictinol to produce restrictinol, and the nonribosomal peptide synthetase resC catalyzes the C3 esterification of restrictinol with glycine that leads to restricticin. This is Highly reducing polyketide synthase resH from Aspergillus sclerotiorum.